Consider the following 352-residue polypeptide: tRNA pseudouridine synthase D (352 aa).

D81 acts as the Nucleophile in catalysis. Residues 157-303 (GIPNYFGVQR…MEHERRILRL (147 aa)) enclose the TRUD domain.

It belongs to the pseudouridine synthase TruD family.

It carries out the reaction uridine(13) in tRNA = pseudouridine(13) in tRNA. In terms of biological role, responsible for synthesis of pseudouridine from uracil-13 in transfer RNAs. The sequence is that of tRNA pseudouridine synthase D from Pseudomonas syringae pv. tomato (strain ATCC BAA-871 / DC3000).